The following is a 1136-amino-acid chain: Probable LRR receptor-like serine/threonine-protein kinase At4g36180 (1136 aa).

A signal peptide spans 1 to 22; the sequence is MAMDISLFFIFLVIYAPLVSYA. Over 23–751 the chain is Extracellular; the sequence is DESQAEIDAL…TAEGKKKKRK (729 aa). LRR repeat units lie at residues 93-115, 117-139, 141-162, 163-186, 187-210, 211-233, 235-256, and 259-280; these read MLRKLSLRSNSFNGTIPTSLAYC, RLLSVFLQYNSLSGKLPPAMRNL, SLEVFNVAGNRLSGEIPVGLPS, SLQFLDISSNTFSGQIPSGLANLT, QLQLLNLSYNQLTGEIPASLGNLQ, SLQYLWLDFNLLQGTLPSAISNC, SLVHLSASENEIGGVIPAAYGA, and KLEVLSLSNNNFSGTVPFSLFC. N-linked (GlcNAc...) asparagine glycosylation is found at Asn-105 and Asn-138. Asn-184, Asn-192, and Asn-232 each carry an N-linked (GlcNAc...) asparagine glycan. 2 N-linked (GlcNAc...) asparagine glycosylation sites follow: Asn-269 and Asn-281. LRR repeat units follow at residues 283–304, 309–330, 333–355, 357–379, 381–403, 405–426, 429–452, 453–479, 480–500, 501–524, 525–546, 549–571, 573–595, 597–620, 621–643, 645–666, 669–691, and 694–716; these read SLTIVQLGFNAFSDIVRPETTA, GLQVLDLQENRISGRFPLWLTN, SLKNLDVSGNLFSGEIPPDIGNL, RLEELKLANNSLTGEIPVEIKQC, SLDVLDFEGNSLKGQIPEFLGYM, ALKVLSLGRNSFSGYVPSSMVN, QLERLNLGENNLNGSFPVELMALT, SLSELDLSGNRFSGAVPVSISNLSNLS, FLNLSGNGFSGEIPASVGNLF, KLTALDLSKQNMSGEVPVELSGLP, NVQVIALQGNNFSGVVPEGFSS, SLRYVNLSSNSFSGEIPQTFGFL, LLVSLSLSDNHISGSIPPEIGNC, ALEVLELRSNRLMGHIPADLSRLP, RLKVLDLGQNNLSGEIPPEISQS, SLNSLSLDHNHLSGVIPGSFSG, NLTKMDLSVNNLTGEIPASLALI, and NLVYFNVSSNNLKGEIPASLGSR. N-linked (GlcNAc...) asparagine glycosylation occurs at Asn-365. N-linked (GlcNAc...) asparagine glycosylation is found at Asn-441, Asn-474, Asn-477, Asn-482, Asn-511, Asn-535, Asn-554, and Asn-594. Asn-631 is a glycosylation site (N-linked (GlcNAc...) asparagine). Asn-669, Asn-679, Asn-699, and Asn-719 each carry an N-linked (GlcNAc...) asparagine glycan. A helical membrane pass occupies residues 752–772; sequence MILMIVMAAIGAFLLSLFCCF. Over 773 to 1136 the chain is Cytoplasmic; that stretch reads YVYTLLKWRK…ADPTSQPSPA (364 aa). Residues 786–819 form a disordered region; sequence QQSTTGEKKRSPGRTSAGSRVRSSTSRSSTENGE. Residues 799–815 are compositionally biased toward low complexity; the sequence is RTSAGSRVRSSTSRSST. A phosphothreonine mark is found at Thr-830 and Thr-838. A Protein kinase domain is found at 841–1123; sequence FDEENVLSRT…LEGCRVGPDV (283 aa). Phosphotyrosine occurs at positions 915 and 1010.

The protein belongs to the protein kinase superfamily. Ser/Thr protein kinase family.

The protein localises to the cell membrane. It catalyses the reaction L-seryl-[protein] + ATP = O-phospho-L-seryl-[protein] + ADP + H(+). It carries out the reaction L-threonyl-[protein] + ATP = O-phospho-L-threonyl-[protein] + ADP + H(+). The polypeptide is Probable LRR receptor-like serine/threonine-protein kinase At4g36180 (Arabidopsis thaliana (Mouse-ear cress)).